A 413-amino-acid polypeptide reads, in one-letter code: Corticotropin-releasing factor receptor 2 (413 aa).

Positions 1-22 (MDSTIFEIIIDEFDANCSLLDA) form a signal peptide, not cleaved. Over 1–110 (MDSTIFEIII…CVPILDNKRK (110 aa)) the chain is Extracellular. An N-linked (GlcNAc...) asparagine glycan is attached at asparagine 16. Intrachain disulfides connect cysteine 17–cysteine 53, cysteine 43–cysteine 86, and cysteine 67–cysteine 101. N-linked (GlcNAc...) asparagine glycosylation is found at asparagine 77, asparagine 89, and asparagine 97. Residues 111–141 (YALHYKIALIINYLGHCISILALVIAFLLFL) form a helical membrane-spanning segment. Residues 142–148 (CLRSIRC) lie on the Cytoplasmic side of the membrane. The helical transmembrane segment at 149–173 (LRNIIHWNLITTFILRNIMWFLLQM) threads the bilayer. The Extracellular segment spans residues 174–187 (IDHNIHESNEVWCR). A disulfide bridge connects residues cysteine 186 and cysteine 256. Residues 188 to 216 (CITTIYNYFVVTNFFWMFVEGCYLHTAIV) form a helical membrane-spanning segment. At 217-223 (MTYSTDK) the chain is on the cytoplasmic side. The helical transmembrane segment at 224 to 251 (LRKWVFLFIGWCIPSPIIVTWAICKLFY) threads the bilayer. Residues 252–267 (ENEQCWIGKEPGKYID) are Extracellular-facing. A helical transmembrane segment spans residues 268–293 (YIYQGRVILVLLINFVFLFNIVRILM). Over 294–304 (TKLRASTTSET) the chain is Cytoplasmic. A helical membrane pass occupies residues 305-329 (IQYRKAVKATLVLLPLLGITYMLFF). Residues 330–336 (VNPGEDD) are Extracellular-facing. Residues 337–366 (VSQIVFIYFNSFLQSFQGFFVSVFYCFLNG) form a helical membrane-spanning segment. Residues 367–413 (EVRSAARKRWHRWQDHHSLRVRVARAMSIPTSPTRISFHSIKQTAAV) are Cytoplasmic-facing.

Belongs to the G-protein coupled receptor 2 family. Post-translationally, a N-glycosylation site within the signal peptide impedes its proper cleavage and function.

Its subcellular location is the cell membrane. In terms of biological role, G-protein coupled receptor for CRH (corticotropin-releasing factor), UCN (urocortin), UCN2 and UCN3. Has high affinity for UCN. Ligand binding causes a conformation change that triggers signaling via guanine nucleotide-binding proteins (G proteins) and down-stream effectors, such as adenylate cyclase. Promotes the activation of adenylate cyclase, leading to increased intracellular cAMP levels. The polypeptide is Corticotropin-releasing factor receptor 2 (crhr2) (Xenopus laevis (African clawed frog)).